The following is a 240-amino-acid chain: UPF0309 protein in nagA 3'region (240 aa).

The SIS domain occupies I31–E206.

This sequence belongs to the UPF0309 family.

This is UPF0309 protein in nagA 3'region from Lysinibacillus sphaericus (Bacillus sphaericus).